The following is a 331-amino-acid chain: UBX domain-containing protein 2B (331 aa).

Composition is skewed to basic and acidic residues over residues 1-16 (MAEG…ERGS) and 37-48 (DEMKCKSSKPDR). The tract at residues 1-70 (MAEGGRAEPE…PHRLYSGDHK (70 aa)) is disordered. A2 is modified (N-acetylalanine). A Phosphoserine modification is found at S56. Position 59 is a phosphothreonine (T59). S66 carries the post-translational modification Phosphoserine. In terms of domain architecture, SEP spans 141 to 206 (DVQVLLKLWR…MEDHQDQEYI (66 aa)). Phosphoserine occurs at positions 231, 234, and 235. The 78-residue stretch at 252–329 (DSMPTTKIQI…DILNTVILQQ (78 aa)) folds into the UBX domain.

Belongs to the NSFL1C family. In terms of assembly, interacts with VCP. Does not bind ubiquitin.

It is found in the nucleus. The protein localises to the cytoplasm. The protein resides in the cytosol. It localises to the endoplasmic reticulum. Its subcellular location is the golgi apparatus. It is found in the cytoskeleton. The protein localises to the microtubule organizing center. The protein resides in the centrosome. In terms of biological role, adapter protein required for Golgi and endoplasmic reticulum biogenesis. Involved in Golgi and endoplasmic reticulum maintenance during interphase and in their reassembly at the end of mitosis. The complex formed with VCP has membrane fusion activity; membrane fusion activity requires USO1-GOLGA2 tethering and BET1L. VCPIP1 is also required, but not its deubiquitinating activity. Together with NSFL1C/p47, regulates the centrosomal levels of kinase AURKA/Aurora A during mitotic progression by promoting AURKA removal from centrosomes in prophase. Also, regulates spindle orientation during mitosis. The polypeptide is UBX domain-containing protein 2B (Ubxn2b) (Mus musculus (Mouse)).